We begin with the raw amino-acid sequence, 131 residues long: Putative pre-16S rRNA nuclease (131 aa).

The protein belongs to the YqgF nuclease family.

The protein localises to the cytoplasm. In terms of biological role, could be a nuclease involved in processing of the 5'-end of pre-16S rRNA. The polypeptide is Putative pre-16S rRNA nuclease (Bordetella petrii (strain ATCC BAA-461 / DSM 12804 / CCUG 43448)).